The following is a 1040-amino-acid chain: Multidrug resistance protein MdtB (1040 aa).

A run of 12 helical transmembrane segments spans residues 16 to 36 (FIMR…AGII), 347 to 367 (LMMA…NIPA), 369 to 389 (IIPG…MVFL), 396 to 416 (LTLM…IVVI), 440 to 460 (IGFT…PLLF), 472 to 492 (FAIT…TLTP), 537 to 557 (WLTL…WVFI), 863 to 883 (LGST…VLGI), 888 to 908 (FIHP…ALLA), 911 to 931 (IAGS…IGIV), 968 to 988 (ILMT…STGV), and 998 to 1018 (IGMV…TPVI).

The protein belongs to the resistance-nodulation-cell division (RND) (TC 2.A.6) family. MdtB subfamily. Part of a tripartite efflux system composed of MdtA, MdtB and MdtC. MdtB forms a heteromultimer with MdtC.

The protein resides in the cell inner membrane. In terms of biological role, the MdtABC tripartite complex confers resistance against novobiocin and deoxycholate. This Escherichia coli (strain 55989 / EAEC) protein is Multidrug resistance protein MdtB.